The following is a 72-amino-acid chain: Protein kish-A (72 aa).

Residues 1–26 form the signal peptide; it reads MSAIFNFQSLLTVILLLICTCAYIRS. At 27 to 53 the chain is on the extracellular side; sequence LAPSILDRNKTGLLGIFWKCARIGERK. Asn35 is a glycosylation site (N-linked (GlcNAc...) asparagine). Residues 54-71 traverse the membrane as a helical segment; it reads SPYVAICCIVMAFSILFI. Gln72 is a topological domain (cytoplasmic).

The protein belongs to the KISH family.

Its subcellular location is the golgi apparatus membrane. Functionally, involved in the early part of the secretory pathway. The chain is Protein kish-A (Tmem167a) from Mus musculus (Mouse).